Here is a 218-residue protein sequence, read N- to C-terminus: Ribose-5-phosphate isomerase A (218 aa).

Substrate is bound by residues S28–T31, D81–D84, and K94–G97. Residue E103 is the Proton acceptor of the active site. Residue K121 coordinates substrate.

This sequence belongs to the ribose 5-phosphate isomerase family. In terms of assembly, homodimer.

The enzyme catalyses aldehydo-D-ribose 5-phosphate = D-ribulose 5-phosphate. It participates in carbohydrate degradation; pentose phosphate pathway; D-ribose 5-phosphate from D-ribulose 5-phosphate (non-oxidative stage): step 1/1. Catalyzes the reversible conversion of ribose-5-phosphate to ribulose 5-phosphate. The chain is Ribose-5-phosphate isomerase A from Dichelobacter nodosus (strain VCS1703A).